Reading from the N-terminus, the 171-residue chain is Small ribosomal subunit protein uS5 (171 aa).

Residues 16–79 form the S5 DRBM domain; it reads LVERLVTVDR…EAAKRNMITV (64 aa).

This sequence belongs to the universal ribosomal protein uS5 family. In terms of assembly, part of the 30S ribosomal subunit. Contacts proteins S4 and S8.

With S4 and S12 plays an important role in translational accuracy. Its function is as follows. Located at the back of the 30S subunit body where it stabilizes the conformation of the head with respect to the body. This Psychrobacter arcticus (strain DSM 17307 / VKM B-2377 / 273-4) protein is Small ribosomal subunit protein uS5.